Here is a 202-residue protein sequence, read N- to C-terminus: Transmembrane gamma-carboxyglutamic acid protein 2 (202 aa).

A signal peptide spans 1-23; it reads MRGHPSLLLLYMALTTCLDTSPS. The propeptide occupies 24-49; sequence EETDQEVFLGPPEAQSFLSSHTRIPR. The Gla domain occupies 50 to 96; the sequence is ANHWDLELLTPGNLERECLEERCSWEEAREYFEDNTLTERFWESYIY. The Extracellular portion of the chain corresponds to 50–109; the sequence is ANHWDLELLTPGNLERECLEERCSWEEAREYFEDNTLTERFWESYIYNGKGGRGRVDVAS. Cys67 and Cys72 form a disulfide bridge. Glu70 carries the post-translational modification 4-carboxyglutamate. Residues 110-130 form a helical membrane-spanning segment; that stretch reads LAVGLTGGILLIVLAGLGAFW. Residues 131–202 are Cytoplasmic-facing; sequence YLRWRQHRGQ…PPYTSLRRPH (72 aa). The interval 143-202 is disordered; sequence CPQEAGLISPLSPLNPLGPPTPLPPPPPPPPGLPTYEQALAASGVHDAPPPPYTSLRRPH. The segment covering 158–175 has biased composition (pro residues); the sequence is PLGPPTPLPPPPPPPPGL. An LPXY motif; mediates binding to WW domain-containing proteins motif is present at residues 175–178; sequence LPTY. The PPXY motif; mediates binding to WW domain-containing proteins motif lies at 192–195; it reads PPPY.

In terms of assembly, interacts with NEDD4. Interacts (via cytoplasmic domain) with transcriptional coactivator YAP1. Gamma-carboxyglutamate residues are formed by vitamin K dependent carboxylation. These residues are essential for the binding of calcium. In terms of tissue distribution, widely expressed with highest levels in kidney. Also highly expressed in the thyroid.

It localises to the cell membrane. This chain is Transmembrane gamma-carboxyglutamic acid protein 2, found in Homo sapiens (Human).